Consider the following 437-residue polypeptide: Aminopeptidase G (437 aa).

Active-site residues include C70, H361, and N382.

Belongs to the peptidase C1 family.

It is found in the cytoplasm. The chain is Aminopeptidase G (pepG) from Lactobacillus delbrueckii subsp. lactis.